Here is a 437-residue protein sequence, read N- to C-terminus: Putative permease IIC component (437 aa).

In terms of domain architecture, PTS EIIC type-2 spans 2–437; it reads FDYILSLGGT…LFLRKRELSE (436 aa). A run of 12 helical transmembrane segments spans residues 5-25, 35-55, 88-108, 134-154, 173-193, 215-235, 236-256, 302-322, 325-345, 354-374, 385-405, and 410-430; these read ILSL…GLIF, AGVT…MAID, ATAI…AMLV, LMTG…ALSL, ISIP…LDAI, GMVG…GLAA, GEGF…MVLF, TIAV…ILPG, VLPL…TVIH, ISGV…APYF, FAGE…GWSI, and SLGI…VLFL.

It is found in the cell inner membrane. The phosphoenolpyruvate-dependent sugar phosphotransferase system (PTS), a major carbohydrate active -transport system, catalyzes the phosphorylation of incoming sugar substrates concomitant with their translocation across the cell membrane. The sequence is that of Putative permease IIC component (sgcC) from Escherichia coli (strain K12).